Reading from the N-terminus, the 502-residue chain is Lysine--tRNA ligase (502 aa).

Mg(2+)-binding residues include Glu403 and Glu410.

The protein belongs to the class-II aminoacyl-tRNA synthetase family. As to quaternary structure, homodimer. The cofactor is Mg(2+).

It localises to the cytoplasm. The enzyme catalyses tRNA(Lys) + L-lysine + ATP = L-lysyl-tRNA(Lys) + AMP + diphosphate. This Synechococcus sp. (strain CC9605) protein is Lysine--tRNA ligase.